Reading from the N-terminus, the 559-residue chain is Cytokine-like nuclear factor N-PAC (559 aa).

Residues 9-70 (VNDLVWAKMK…ETQIKPYQEF (62 aa)) enclose the PWWP domain. Residues 106–137 (SEQDNRPDPDVEFNKLREGGTESGEETTVNNT) form a disordered region. Residues 108-125 (QDNRPDPDVEFNKLREGG) show a composition bias toward basic and acidic residues. The tract at residues 267–559 (RNIQASNLKF…SSAVYVRARF (293 aa)) is dehydrogenase domain. NAD(+) contacts are provided by residues 277–291 (GFLGLGIMGCGMVKN) and lysine 511.

Belongs to the HIBADH-related family. NP60 subfamily. Binds to mononucleosomes.

The protein resides in the chromosome. Functionally, nucleosome-destabilizing factor that is recruited to genes during transcriptional activation and colocalizes with a subset of trimethylated 'Lys-36' histone H3 (H3K36me3)-enriched regions. In Aedes aegypti (Yellowfever mosquito), this protein is Cytokine-like nuclear factor N-PAC.